We begin with the raw amino-acid sequence, 425 residues long: Dihydroorotase (425 aa).

Residues His-61 and His-63 each coordinate Zn(2+). Residues His-63–Arg-65 and Asn-95 contribute to the substrate site. Zn(2+) is bound by residues Asp-153, His-180, and His-233. Asn-279 is a binding site for substrate. Asp-306 provides a ligand contact to Zn(2+). Asp-306 is an active-site residue. Substrate is bound at residue His-310.

Belongs to the metallo-dependent hydrolases superfamily. DHOase family. Class I DHOase subfamily. Zn(2+) is required as a cofactor.

It carries out the reaction (S)-dihydroorotate + H2O = N-carbamoyl-L-aspartate + H(+). Its pathway is pyrimidine metabolism; UMP biosynthesis via de novo pathway; (S)-dihydroorotate from bicarbonate: step 3/3. Catalyzes the reversible cyclization of carbamoyl aspartate to dihydroorotate. The sequence is that of Dihydroorotase from Geobacter sulfurreducens (strain ATCC 51573 / DSM 12127 / PCA).